The following is a 222-amino-acid chain: MLEGYYIIENPGVVPSERRFRMKDLKAWGYDLHLGTIEGERAYFVSRTGEREEGETYSLQGKTYHIEKTEKEIPENARLLARIVIERGQPYLEFWLEEEDTVYPLAKEDPRIILKRLWEKEKLNQLLKHVRAVGLTTDFYKDTVFIKSIPLPYEEYPPKVRRVLREVRDIHRDIMGFGRFVFQYFGEENKTHNYRLHWTLPTLHLFDVEIANEIDKVLGMLD.

It belongs to the UPF0128 family.

In Pyrococcus furiosus (strain ATCC 43587 / DSM 3638 / JCM 8422 / Vc1), this protein is UPF0128 protein PF1488.